The chain runs to 757 residues: Endosialin (757 aa).

The first 17 residues, 1–17 (MLLRLLLAWAAAGPTLG), serve as a signal peptide directing secretion. Topologically, residues 18 to 687 (QDPWAAEPRA…EHSQRDDRWL (670 aa)) are extracellular. One can recognise a C-type lectin domain in the interval 30-156 (GPSSCYALFP…CTLAVDGYLC (127 aa)). A glycan (O-linked (GalNAc...) threonine) is linked at T60. A disulfide bond links C131 and C147. The region spanning 162 to 232 (GACPALQDEA…WSRAGPLCLG (71 aa)) is the Sushi domain. The EGF-like; calcium-binding domain maps to 312-351 (DTDECQIAGVCQQMCVNYVGGFECYCSEGHELEADGISCS). 3 disulfides stabilise this stretch: C316–C326, C322–C335, and C337–C350. O-linked (GalNAc...) threonine glycans are attached at residues T401, T428, T448, T456, T459, T472, T519, T541, T543, T544, T545, T587, T593, T594, and T595. S598 and S601 each carry an O-linked (GalNAc...) serine glycan. Residues T612 and T619 are each glycosylated (O-linked (GalNAc...) threonine). Residues 618–627 (PTLLPSQSPT) show a composition bias toward low complexity. Positions 618–662 (PTLLPSQSPTNQTSPISPTHPHSKAPQIPREDGPSPKLALWLPSP) are disordered. O-linked (GalNAc...) serine glycosylation is found at S623 and S625. Residues T627 and T630 are each glycosylated (O-linked (GalNAc...) threonine). O-linked (GalNAc...) serine glycosylation is present at S631. A glycan (O-linked (GalNAc...) threonine) is linked at T636. O-linked (GalNAc...) serine glycosylation occurs at S640. The chain crosses the membrane as a helical span at residues 688–708 (LVALLVPTCVFLVVLLALGIV). Over 709 to 757 (YCTRCGPHAPNKRITDCYRWVIHAGSKSPTEPMPPRGSLTGVQTCRTSV) the chain is Cytoplasmic. Residues 737-757 (PTEPMPPRGSLTGVQTCRTSV) are disordered. S746 is subject to Phosphoserine. Residues 748-757 (TGVQTCRTSV) are compositionally biased toward polar residues.

As to quaternary structure, interacts with PDGFRA; this interaction promotes PDGF receptor signaling pathway. Interacts with integrin beta-1/ITGB1. Interacts with insulin receptor/INSR; this interaction diminishes INSR autophosphorylation. O-glycosylated with sialylated oligosaccharides. Post-translationally, may be N-glycosylated. In terms of tissue distribution, expressed in tumor endothelial cells but absent or barely detectable in normal endothelial cells. Expressed in metastatic lesions of the liver and during angiogenesis of corpus luteum formation and wound healing. Expressed in vascular endothelial cells of malignant tumors but not in normal blood vessels. Expressed in stromal fibroblasts. Strongly expressed in pericytes. Expressed on stromal cells and cells with lymphoid morphology such a T-cells.

The protein localises to the membrane. In terms of biological role, cell surface glycoprotein involved in various biological processes including angiogenesis, immune response modulation, and tissue remodeling and repair. Participates in pericyte proliferation through positive modulation of the PDGF receptor signaling pathway. Acts as a scaffold for factor X, triggering allosteric changes and the spatial re-alignment of factor X with the TF-factor VIIa complex, thereby enhancing coagulation activation. Modulates the insulin signaling pathway by interacting with insulin receptor/INSR and by diminishing its capacity to be autophosphorylated in response to insulin. Also regulates LPS-induced inflammatory response in macrophages by favoring the production of proinflammatory cytokines. In human, negatively regulates T-cell proliferation compared with stromal cells where it increases proliferation. This is Endosialin (CD248) from Homo sapiens (Human).